An 86-amino-acid chain; its full sequence is Neuropeptide-like 3 (86 aa).

Positions 1–16 (MFKLCVFVALLSLAAA) are cleaved as a signal peptide. Propeptides lie at residues 17–50 (APAPAPAPGLIAPGLVAPGIWGPTVVGSPLVAPQ) and 63–75 (AITQVHPSPLLIK). Ile85 is modified (isoleucine amide).

The protein localises to the secreted. This Drosophila yakuba (Fruit fly) protein is Neuropeptide-like 3 (Nplp3).